Consider the following 185-residue polypeptide: Large ribosomal subunit protein bL12c (185 aa).

The transit peptide at 1 to 47 directs the protein to the chloroplast; it reads MASTALSSAFSLLSLPSSSSPAAAAAAAPRSFAVPSRARPRRAVAVV.

Belongs to the bacterial ribosomal protein bL12 family.

It localises to the plastid. The protein resides in the chloroplast. The protein is Large ribosomal subunit protein bL12c (RPL12-2) of Oryza sativa subsp. japonica (Rice).